A 436-amino-acid chain; its full sequence is Chorismate synthase, chloroplastic (436 aa).

The tract at residues 1-24 (MASSSLTSKSILGSTKLGSSSLPS) is disordered. A chloroplast-targeting transit peptide spans 1 to 50 (MASSSLTSKSILGSTKLGSSSLPSELRRLSSPAVQISLRTQTRKNFQIQA).

The protein belongs to the chorismate synthase family. In terms of assembly, homotetramer. FMNH2 is required as a cofactor.

It localises to the plastid. Its subcellular location is the chloroplast. It carries out the reaction 5-O-(1-carboxyvinyl)-3-phosphoshikimate = chorismate + phosphate. It participates in metabolic intermediate biosynthesis; chorismate biosynthesis; chorismate from D-erythrose 4-phosphate and phosphoenolpyruvate: step 7/7. Functionally, catalyzes the last common step of the biosynthesis of aromatic amino acids, produced via the shikimic acid pathway. In Arabidopsis thaliana (Mouse-ear cress), this protein is Chorismate synthase, chloroplastic (EMB1144).